A 138-amino-acid polypeptide reads, in one-letter code: Putative pre-16S rRNA nuclease (138 aa).

It belongs to the YqgF nuclease family.

It is found in the cytoplasm. Its function is as follows. Could be a nuclease involved in processing of the 5'-end of pre-16S rRNA. The sequence is that of Putative pre-16S rRNA nuclease from Escherichia fergusonii (strain ATCC 35469 / DSM 13698 / CCUG 18766 / IAM 14443 / JCM 21226 / LMG 7866 / NBRC 102419 / NCTC 12128 / CDC 0568-73).